Here is a 165-residue protein sequence, read N- to C-terminus: Small ribosomal subunit protein bS16 (165 aa).

It belongs to the bacterial ribosomal protein bS16 family.

This is Small ribosomal subunit protein bS16 from Azobacteroides pseudotrichonymphae genomovar. CFP2.